Reading from the N-terminus, the 179-residue chain is Large ribosomal subunit protein uL5 (179 aa).

Belongs to the universal ribosomal protein uL5 family. Part of the 50S ribosomal subunit; part of the 5S rRNA/L5/L18/L25 subcomplex. Contacts the 5S rRNA and the P site tRNA. Forms a bridge to the 30S subunit in the 70S ribosome.

Functionally, this is one of the proteins that bind and probably mediate the attachment of the 5S RNA into the large ribosomal subunit, where it forms part of the central protuberance. In the 70S ribosome it contacts protein S13 of the 30S subunit (bridge B1b), connecting the 2 subunits; this bridge is implicated in subunit movement. Contacts the P site tRNA; the 5S rRNA and some of its associated proteins might help stabilize positioning of ribosome-bound tRNAs. The polypeptide is Large ribosomal subunit protein uL5 (Lawsonia intracellularis (strain PHE/MN1-00)).